Here is a 378-residue protein sequence, read N- to C-terminus: O-methyltransferase gsfD (378 aa).

Residues 219-220 (GG), Asp244, 266-267 (DM), and Arg282 contribute to the S-adenosyl-L-methionine site. The Proton acceptor role is filled by His286.

This sequence belongs to the class I-like SAM-binding methyltransferase superfamily. Cation-independent O-methyltransferase family.

It carries out the reaction desmethyl-dehydrogriseofulvin + S-adenosyl-L-methionine = dehydrogriseofulvin + S-adenosyl-L-homocysteine + H(+). It participates in secondary metabolite biosynthesis; terpenoid biosynthesis. Functionally, O-methyltransferase; part of the gene cluster that mediates the biosynthesis of griseofulvin, an important antifungal drug that has been in use for a long time for treating dermatophyte infections. The first step of the pathway is the formation of the heptaketide backbone by gsfA which is initiated by priming with acetyl-CoA, followed by sequential condensations of 6 malonyl-CoA units. The resulting benzophenone can undergo a spontaneous dehydration to form norlichexanthone. However, the true precursor for the griseofulvin biosynthesis is not norlichexanthone, but the heptaketide benzophenone that is O-methylated at 3-OH by gsfB to produce griseophenone D which is further methylated at 9-OH by gsfC to yield griseophenone C. Griseophenone C is then substrate of halogenase gsfI which is responsible for the regio-specific chlorination at the C13 position to form griseophenone B. The cytochrome P450 gsfF catalyzes the coupling of orcinol and phloroglucinol rings in griseophenone B to form desmethyl-dehydrogriseofulvin A which is further methylated at 5-OH by gsfD to yield dehydrogriseofulvin. Finally, gsfE performs stereospecific reduction of enone 18 of dehydrogriseofulvin to afford the final product griseofulvin. This is O-methyltransferase gsfD from Penicillium aethiopicum.